We begin with the raw amino-acid sequence, 330 residues long: Beta-1,6-galactofuranosyltransferase WbbI (330 aa).

The protein resides in the cytoplasm. It functions in the pathway bacterial outer membrane biogenesis; lipopolysaccharide biosynthesis. In terms of biological role, involved in the transfer of galactofuranose (Galf) onto an alpha-D-gluco-configured acceptor substrate to form a beta-1,6-linkage. It uses n-octyl alpha-D-glucopyranoside as an acceptor substrate for the addition of galactofuranose from the donor substrate UDP-galactofuranose. It is not able to use beta-D-glucopyranoside isomers. The sequence is that of Beta-1,6-galactofuranosyltransferase WbbI (wbbI) from Escherichia coli (strain K12).